The following is a 1041-amino-acid chain: Nuclear migration protein unc-83 (1041 aa).

3 disordered regions span residues 258–283, 453–498, and 613–646; these read VGHL…TETV, IHGQ…LEDD, and IRNR…DSIS. Positions 456 to 465 are enriched in basic residues; it reads QKKPLRRASR. A compositionally biased stretch (basic and acidic residues) spans 613–626; sequence IRNRDSDTAPEHSD. 2 coiled-coil regions span residues 785–816 and 931–951; these read RSKE…DLLA and KAEL…FNDM. Residues 986-1041 enclose the KASH domain; sequence TENEPLTIAEAISSSRLIKFTFALSLLAALAAIFYYHVFGKPFGPHVTYVNGPPPV. The chain crosses the membrane as a helical; Anchor for type IV membrane protein span at residues 1005-1024; it reads FTFALSLLAALAAIFYYHVF.

In terms of assembly, component of the unc-83-unc-84 LINC complex which contains at least unc-83 and unc-84. Within the unc-83-unc-84 LINC complex interacts with unc-84 (via C-terminus); the interaction is probably required to recruit unc-83 to the nuclear envelope where it then recruits dynein and kinesin-1 complexes to regulate nuclear migration. Interacts with bicd-1 and dlc-1. Interacts with nud-2 (via C-terminus); the interaction is direct, and is required for recruitment of nud-2 to the nuclear envelope. Interacts with klc-2; the interaction is direct. Predominantly expressed in migratory nuclei. Expressed in a variety of cell-types, including cells around the pharynx and in the uterus.

The protein localises to the nucleus membrane. Its subcellular location is the nucleus outer membrane. Its function is as follows. Cargo-specific adapter that is involved in nuclear migration during development and thereafter. Component of the unc-83-unc-84 LINC (LInker of Nucleoskeleton and Cytoskeleton) complex where it interacts with unc-84 to form a bridge connecting the nuclear envelope to the cytoskeleton which allows for nuclear transport along microtubules. Within the complex, connects the nuclear envelope to the microtubule cytoskeleton through the kinesin-1 light chain protein klc-2 (most likely within the Kinesin 1 motor complex) to regulate nuclear migrations. Moreover, within the complex, also recruits the large microtubule-associated bicd-1-dlc-1-egal-1 and lis-1-nud-2 complexes to the nuclear envelope to regulate both the bidirectional migration of nuclei and the extent of nuclear migrations. Not required for centrosome attachment to the nucleus. This is Nuclear migration protein unc-83 from Caenorhabditis elegans.